Here is a 119-residue protein sequence, read N- to C-terminus: Ergochrome gene cluster protein CPUR_05426 (119 aa).

Its pathway is pigment biosynthesis. In terms of biological role, part of the ergochrome gene cluster responsible for the typical purple-black color of the ergot sclerotia. The ergochrome gene cluster produces several ergot pigments including the yellow ergochrome secalonic acid and its derivatives, as well as the red anthraquinones endocrocin and clavorubin. The pathway begins with the synthesis of atrochrysone thioester by the polyketide synthase (PKS) CPUR_05437. The atrochrysone carboxyl ACP thioesterase CPUR_05436 then breaks the thioester bond and releases the atrochrysone carboxylic acid from CPUR_05437. The atrochrysone carboxylic acid is then converted to atrochrysone which is further transformed into emodin anthrone. The next step is performed by the anthrone oxygenase CPUR_05434 that catalyzes the oxidation of emodinanthrone to emodin. Emodin is further modified to yield monodictyphenone via several steps involving CPUR_05427, CPUR_05428, CPUR_05429 and CPUR_05430. The short chain dehydrogenase/reductase CPUR_05418 then catalyzes the C-5 ketoreduction to give the xanthone skeleton of the monomeric units. Ergochromes formation requires further dimerization steps of different xanthone units, probably catalyzed by the cytochrome P450 monooxygenase CPUR_05419. CPUR_05425, CPUR_05426 and CPUR_05431 are unique to Claviceps, thus it is likely that they are involved in further modification of xanthone units or in their dimerization. The yellow ergochromes and the red anthraquinone pigments endocrocin and clavorubin are products from the same PKS derived precursors and the latter are likely shunt products in the pathway of xanthone biosynthesis. It is proposed that atrochrysone carboxylic acid released from the PKS CPUR_05437 can also be converted to endocrocin anthrone which is further oxidized into endocrocin by CPUR_05435. Endocrocin could be then modified to clavorubin, possibly by CPUR_05423 and CPUR_05431. Clavorubin is the principal anthraquinone metabolite produced by the cluster with a much higher yield compared to endocrocin. This Claviceps purpurea (strain 20.1) (Ergot fungus) protein is Ergochrome gene cluster protein CPUR_05426.